The chain runs to 261 residues: Ribosomal RNA small subunit methyltransferase G (261 aa).

S-adenosyl-L-methionine contacts are provided by residues glycine 94, leucine 99, 117–119 (EST), 145–146 (VE), and arginine 164.

Belongs to the methyltransferase superfamily. RNA methyltransferase RsmG family.

It is found in the cytoplasm. Its function is as follows. Specifically methylates the N7 position of a guanine in 16S rRNA. This Rubrobacter xylanophilus (strain DSM 9941 / JCM 11954 / NBRC 16129 / PRD-1) protein is Ribosomal RNA small subunit methyltransferase G.